The following is a 1134-amino-acid chain: DNA polymerase II large subunit (1134 aa).

It belongs to the archaeal DNA polymerase II family. Heterodimer of a large subunit and a small subunit.

It carries out the reaction DNA(n) + a 2'-deoxyribonucleoside 5'-triphosphate = DNA(n+1) + diphosphate. It catalyses the reaction Exonucleolytic cleavage in the 3'- to 5'-direction to yield nucleoside 5'-phosphates.. Functionally, possesses two activities: a DNA synthesis (polymerase) and an exonucleolytic activity that degrades single-stranded DNA in the 3'- to 5'-direction. Has a template-primer preference which is characteristic of a replicative DNA polymerase. This chain is DNA polymerase II large subunit, found in Methanocella arvoryzae (strain DSM 22066 / NBRC 105507 / MRE50).